A 956-amino-acid chain; its full sequence is Zinc fingers and homeoboxes protein 3 (956 aa).

The segment at 1 to 107 is required for nuclear localization; sequence MASKRKSTTP…SEHTDFNKDP (107 aa). The segment at 22–66 is disordered; sequence DASMEAQPAETLPEGPQQDLPPEASAASSEAAQNPSSTDGSTLAN. Low complexity predominate over residues 42–58; it reads PPEASAASSEAAQNPSS. 2 consecutive C2H2-type zinc fingers follow at residues 77-100 and 109-132; these read YSCK…NSEH and FVCS…ATCH. Positions 242–488 are required for homodimerization and interaction with NFYA; the sequence is ASASSAKNPH…LLTACPSITS (247 aa). A required for repressor activity region spans residues 303 to 502; that stretch reads LSSIPTYNAA…DASIYKNKKS (200 aa). DNA-binding regions (homeobox) lie at residues 304–363 and 494–553; these read SSIP…GISW and ASIY…RNLK. Residues 497–555 are required for nuclear localization; sequence YKNKKSHEQLSALKGSFCRNQFPGQSEVEHLTKVTGLSTREVRKWFSDRRYHCRNLKGS. 2 disordered regions span residues 598-618 and 666-695; these read PSAK…KYKE and KVNA…GEED. Residues S599 and S604 each carry the phosphoserine modification. A DNA-binding region (homeobox 3) is located at residues 612–671; sequence TPTKYKERAPEQLRALESSFAQNPLPLDEELDRLRSETKMTRREIDSWFSERRKKVNAEE. Residues 666–677 are compositionally biased toward basic and acidic residues; sequence KVNAEETKKAEE. A compositionally biased stretch (acidic residues) spans 679–695; that stretch reads ASQEEEEAAEDEGGEED. S680, S708, and S723 each carry phosphoserine. 2 DNA-binding regions (homeobox) span residues 764-823 and 835-894; these read PGKV…KNGQ and FPPG…TRAV. The segment at 890–956 is disordered; the sequence is ETRAVADTGS…PQAGRQLETD (67 aa). A phosphoserine mark is found at S927 and S946.

It belongs to the ZHX family. In terms of assembly, homodimer (via homeobox domain 1). Heterodimer with ZHX1 (via homeobox domain 1). Heterodimer with ZHX2 (via homeobox domain 1). Heterodimerization with ZHX1 is a prerequisite for repressor activity. Interacts with NFYA. In terms of tissue distribution, widely expressed. High expression in kidney. Expressed during osteogenic differentiation.

It localises to the nucleus. Its function is as follows. Acts as a transcriptional repressor. Involved in the early stages of mesenchymal stem cell (MSC) osteogenic differentiation. Is a regulator of podocyte gene expression during primary glomerula disease. Binds to promoter DNA. This is Zinc fingers and homeoboxes protein 3 (ZHX3) from Homo sapiens (Human).